The primary structure comprises 291 residues: Lipoyl synthase (291 aa).

Residues C35, C40, C46, C61, C65, C68, and S273 each contribute to the [4Fe-4S] cluster site. Residues 47–262 (FGKRQATFLI…KEKALAMGFE (216 aa)) form the Radical SAM core domain.

It belongs to the radical SAM superfamily. Lipoyl synthase family. [4Fe-4S] cluster serves as cofactor.

Its subcellular location is the cytoplasm. The catalysed reaction is [[Fe-S] cluster scaffold protein carrying a second [4Fe-4S](2+) cluster] + N(6)-octanoyl-L-lysyl-[protein] + 2 oxidized [2Fe-2S]-[ferredoxin] + 2 S-adenosyl-L-methionine + 4 H(+) = [[Fe-S] cluster scaffold protein] + N(6)-[(R)-dihydrolipoyl]-L-lysyl-[protein] + 4 Fe(3+) + 2 hydrogen sulfide + 2 5'-deoxyadenosine + 2 L-methionine + 2 reduced [2Fe-2S]-[ferredoxin]. The protein operates within protein modification; protein lipoylation via endogenous pathway; protein N(6)-(lipoyl)lysine from octanoyl-[acyl-carrier-protein]: step 2/2. Its function is as follows. Catalyzes the radical-mediated insertion of two sulfur atoms into the C-6 and C-8 positions of the octanoyl moiety bound to the lipoyl domains of lipoate-dependent enzymes, thereby converting the octanoylated domains into lipoylated derivatives. This chain is Lipoyl synthase, found in Geobacter sp. (strain M21).